Reading from the N-terminus, the 234-residue chain is Small ribosomal subunit protein uS3 (234 aa).

The KH type-2 domain maps to 39–107; the sequence is VRDYLKKKLS…PVHVNIEEVR (69 aa). The disordered stretch occupies residues 212–234; the sequence is EQPAAAEQEKRGKKSGVKHAAAS.

Belongs to the universal ribosomal protein uS3 family. Part of the 30S ribosomal subunit. Forms a tight complex with proteins S10 and S14.

Functionally, binds the lower part of the 30S subunit head. Binds mRNA in the 70S ribosome, positioning it for translation. The sequence is that of Small ribosomal subunit protein uS3 from Thiobacillus denitrificans (strain ATCC 25259 / T1).